A 368-amino-acid chain; its full sequence is uncharacterized protein (368 aa).

The protein belongs to the CdaR family.

This is an uncharacterized protein from Bacillus subtilis (strain 168).